A 128-amino-acid chain; its full sequence is Serum amyloid A-4 protein (128 aa).

A signal peptide spans 1–18 (MKLFIGLIFCSLVMGVSS). The interval 93–128 (SSEREEDQVSNRRAEEWGRSGQDPDHFRPAGLPKKY) is disordered. The segment covering 99–120 (DQVSNRRAEEWGRSGQDPDHFR) has biased composition (basic and acidic residues).

The protein belongs to the SAA family. Apolipoprotein of the HDL complex.

The protein resides in the secreted. In terms of biological role, major acute phase reactant. The polypeptide is Serum amyloid A-4 protein (Sus scrofa (Pig)).